The chain runs to 170 residues: 3-isopropylmalate dehydratase small subunit 1 (170 aa).

The protein belongs to the LeuD family. LeuD type 2 subfamily. As to quaternary structure, heterodimer of LeuC and LeuD.

The enzyme catalyses (2R,3S)-3-isopropylmalate = (2S)-2-isopropylmalate. Its pathway is amino-acid biosynthesis; L-leucine biosynthesis; L-leucine from 3-methyl-2-oxobutanoate: step 2/4. In terms of biological role, catalyzes the isomerization between 2-isopropylmalate and 3-isopropylmalate, via the formation of 2-isopropylmaleate. In Methanopyrus kandleri (strain AV19 / DSM 6324 / JCM 9639 / NBRC 100938), this protein is 3-isopropylmalate dehydratase small subunit 1 (leuD1).